Reading from the N-terminus, the 305-residue chain is Homoserine O-acetyltransferase (305 aa).

Cysteine 142 acts as the Acyl-thioester intermediate in catalysis. Substrate contacts are provided by lysine 163 and serine 192. The active-site Proton acceptor is the histidine 235. The active site involves glutamate 237. Arginine 249 is a substrate binding site.

It belongs to the MetA family.

Its subcellular location is the cytoplasm. It carries out the reaction L-homoserine + acetyl-CoA = O-acetyl-L-homoserine + CoA. It functions in the pathway amino-acid biosynthesis; L-methionine biosynthesis via de novo pathway; O-acetyl-L-homoserine from L-homoserine: step 1/1. In terms of biological role, transfers an acetyl group from acetyl-CoA to L-homoserine, forming acetyl-L-homoserine. The chain is Homoserine O-acetyltransferase from Bacteroides thetaiotaomicron (strain ATCC 29148 / DSM 2079 / JCM 5827 / CCUG 10774 / NCTC 10582 / VPI-5482 / E50).